We begin with the raw amino-acid sequence, 238 residues long: Uridylate kinase (238 aa).

13-16 (KLSG) contacts ATP. G53 contacts UMP. 2 residues coordinate ATP: G54 and R58. Residues D73 and 134–141 (AGLPYFST) contribute to the UMP site. Positions 162, 168, and 171 each coordinate ATP.

This sequence belongs to the UMP kinase family. Homohexamer.

The protein resides in the cytoplasm. It catalyses the reaction UMP + ATP = UDP + ADP. The protein operates within pyrimidine metabolism; CTP biosynthesis via de novo pathway; UDP from UMP (UMPK route): step 1/1. Its activity is regulated as follows. Inhibited by UTP. In terms of biological role, catalyzes the reversible phosphorylation of UMP to UDP. The sequence is that of Uridylate kinase from Clavibacter michiganensis subsp. michiganensis (strain NCPPB 382).